A 231-amino-acid polypeptide reads, in one-letter code: Axial regulator YABBY 4 (231 aa).

The C4-type zinc finger occupies 26-53 (CGFCTTILLVSVPFTSLSMVVTVRCGHC). 2 disordered regions span residues 98–120 (KVNQEKENSPTTLVSSSDNEDED) and 211–231 (NNGFRERKAQRHSIWGKSPFE).

It belongs to the YABBY family. As to quaternary structure, interacts with SPL/NZZ.

It is found in the nucleus. In terms of biological role, essential for the formation and the abaxial-adaxial asymmetric growth of the ovule outer integument. This chain is Axial regulator YABBY 4 (YAB4), found in Arabidopsis thaliana (Mouse-ear cress).